We begin with the raw amino-acid sequence, 359 residues long: MQGNYKALWLNDDLFDECLEVIDQRLLPFIYDTRHLTTTEEVVTAIKNMTVRGAGVIGSVAAFGIYIAAMEVEGDYELLKEKALLIRESRPTAINLMWAVDKMMELLSASANLIEDARSFAIELNDAEALESQKIAEFGCEIIEEILKQKNKTRINILTHCNAGWLAVIDEGTALAPIYEAKRRGIDVHVWVDETRPRNQGASLTAWELSKEGIEHTIIADNMGGLLMQRGEVDMVIVGADRVSANGDVANKIGTYLKALAAHDNGVPFYVAIPASTFDFEIKDGVKEIPIEERSGDEVKFIRGVDEDGVLRRVRITPEDSPTKNYGFDVTPARLISALITNKGVCRANFDEIKEKFRG.

Residues 52–54 (RGA), Arg-90, and Gln-200 each bind substrate. Asp-241 functions as the Proton donor in the catalytic mechanism. 251–252 (NK) is a binding site for substrate.

It belongs to the eIF-2B alpha/beta/delta subunits family. MtnA subfamily.

The enzyme catalyses 5-(methylsulfanyl)-alpha-D-ribose 1-phosphate = 5-(methylsulfanyl)-D-ribulose 1-phosphate. Its pathway is amino-acid biosynthesis; L-methionine biosynthesis via salvage pathway; L-methionine from S-methyl-5-thio-alpha-D-ribose 1-phosphate: step 1/6. Functionally, catalyzes the interconversion of methylthioribose-1-phosphate (MTR-1-P) into methylthioribulose-1-phosphate (MTRu-1-P). The polypeptide is Methylthioribose-1-phosphate isomerase (Sulfurimonas denitrificans (strain ATCC 33889 / DSM 1251) (Thiomicrospira denitrificans (strain ATCC 33889 / DSM 1251))).